The chain runs to 487 residues: MVPVIALVGRPNVGKSTMFNRLTKTRDAIVGDLSGLTRDRQYGDATWQGRSFILIDTGGITGDEVGMDEKMAEQSLMAIEEADYVLFLVDARAGMTAADQMIAEHLRKRNKSAILVANKIDNIDPDVARAEFSPMGMGNAIPVAGSQGRGINALMEAVLGHLPRDAEDEALDQEVAEGEEAVRIPGPSEKDGIKIAIIGRPNVGKSTLVNRMLGEERVVVYDEPGTTRDSIYIPFERDGEKYTFIDTAGVRKRGKIHEEVEKFSVVKTLQAIKDANVVIFVMDAREGVVDHDLNLLGFALEAGRAIVIALNKWDGMEPGERAYVKTELERRLFFVDFADIHFISALHGTGVGNLYKSVQAAFKSAVTRWPTSRLTQILEDAVSEHQPPLVNGRRIKLRYAHLGGANPPLIVIHGNQTESIPKSYSRYLENTYRRVLKLVGTPIRIEYKGGENPFEGKKNTLTDRQVNKKRRLMSHHKKAEKKRRDKR.

EngA-type G domains are found at residues 3–166 (PVIA…PRDA) and 193–366 (IKIA…KSAV). GTP contacts are provided by residues 9-16 (GRPNVGKS), 56-60 (DTGGI), 118-121 (NKID), 199-206 (GRPNVGKS), 246-250 (DTAGV), and 311-314 (NKWD). Positions 367–451 (TRWPTSRLTQ…PIRIEYKGGE (85 aa)) constitute a KH-like domain. Residues 449–461 (GGENPFEGKKNTL) are compositionally biased toward basic and acidic residues. Positions 449 to 487 (GGENPFEGKKNTLTDRQVNKKRRLMSHHKKAEKKRRDKR) are disordered. The span at 467-487 (NKKRRLMSHHKKAEKKRRDKR) shows a compositional bias: basic residues.

This sequence belongs to the TRAFAC class TrmE-Era-EngA-EngB-Septin-like GTPase superfamily. EngA (Der) GTPase family. Associates with the 50S ribosomal subunit.

Functionally, GTPase that plays an essential role in the late steps of ribosome biogenesis. The sequence is that of GTPase Der from Pseudomonas putida (strain GB-1).